The sequence spans 478 residues: Putative response regulator NtrX-like (478 aa).

The Response regulatory domain occupies 5–121; sequence DVLIVDDEED…KLVILLKRAC (117 aa). Residue Asp-54 is modified to 4-aspartylphosphate. A Sigma-54 factor interaction domain is found at 143–372; that stretch reads LVGNSTITLK…LRNVVEWTLI (230 aa). ATP is bound by residues 171-178 and 235-244; these read GKVGSGKE and ANNGTLYIDE.

Its function is as follows. Member of the two-component regulatory system RBE_0312/RBE_0470. This Rickettsia bellii (strain RML369-C) protein is Putative response regulator NtrX-like.